Here is a 351-residue protein sequence, read N- to C-terminus: Anthranilate phosphoribosyltransferase (351 aa).

5-phospho-alpha-D-ribose 1-diphosphate-binding positions include glycine 80, 83–84, threonine 88, 90–93, 108–116, and serine 120; these read GD, NIST, and KHGNRSVTS. Glycine 80 lines the anthranilate pocket. Residue serine 92 coordinates Mg(2+). An anthranilate-binding site is contributed by asparagine 111. Arginine 166 provides a ligand contact to anthranilate. 2 residues coordinate Mg(2+): aspartate 229 and glutamate 230.

Belongs to the anthranilate phosphoribosyltransferase family. As to quaternary structure, homodimer. Mg(2+) serves as cofactor.

It carries out the reaction N-(5-phospho-beta-D-ribosyl)anthranilate + diphosphate = 5-phospho-alpha-D-ribose 1-diphosphate + anthranilate. The protein operates within amino-acid biosynthesis; L-tryptophan biosynthesis; L-tryptophan from chorismate: step 2/5. Its function is as follows. Catalyzes the transfer of the phosphoribosyl group of 5-phosphorylribose-1-pyrophosphate (PRPP) to anthranilate to yield N-(5'-phosphoribosyl)-anthranilate (PRA). This Pelodictyon phaeoclathratiforme (strain DSM 5477 / BU-1) protein is Anthranilate phosphoribosyltransferase.